The sequence spans 148 residues: Arginine repressor (148 aa).

It belongs to the ArgR family.

The protein resides in the cytoplasm. It participates in amino-acid biosynthesis; L-arginine biosynthesis [regulation]. In terms of biological role, regulates arginine biosynthesis genes. The chain is Arginine repressor from Chlorobium luteolum (strain DSM 273 / BCRC 81028 / 2530) (Pelodictyon luteolum).